The following is a 332-amino-acid chain: Lipoyl synthase (332 aa).

[4Fe-4S] cluster is bound by residues C79, C84, C90, C105, C109, C112, and S319. Positions 91–308 constitute a Radical SAM core domain; the sequence is FSHGTATFMI…ADYGYEIGFK (218 aa).

This sequence belongs to the radical SAM superfamily. Lipoyl synthase family. Requires [4Fe-4S] cluster as cofactor.

It localises to the cytoplasm. It carries out the reaction [[Fe-S] cluster scaffold protein carrying a second [4Fe-4S](2+) cluster] + N(6)-octanoyl-L-lysyl-[protein] + 2 oxidized [2Fe-2S]-[ferredoxin] + 2 S-adenosyl-L-methionine + 4 H(+) = [[Fe-S] cluster scaffold protein] + N(6)-[(R)-dihydrolipoyl]-L-lysyl-[protein] + 4 Fe(3+) + 2 hydrogen sulfide + 2 5'-deoxyadenosine + 2 L-methionine + 2 reduced [2Fe-2S]-[ferredoxin]. The protein operates within protein modification; protein lipoylation via endogenous pathway; protein N(6)-(lipoyl)lysine from octanoyl-[acyl-carrier-protein]: step 2/2. Catalyzes the radical-mediated insertion of two sulfur atoms into the C-6 and C-8 positions of the octanoyl moiety bound to the lipoyl domains of lipoate-dependent enzymes, thereby converting the octanoylated domains into lipoylated derivatives. The polypeptide is Lipoyl synthase (Hahella chejuensis (strain KCTC 2396)).